A 309-amino-acid polypeptide reads, in one-letter code: Mitochondrial glycine transporter (309 aa).

3 Solcar repeats span residues Ser-2–Leu-94, Leu-124–Glu-207, and Gln-219–Leu-304. 6 helical membrane passes run Leu-8–Gln-33, Gly-69–Met-95, Leu-130–Glu-155, Gly-182–Lys-205, Ile-223–Ile-249, and Gly-279–Val-297.

It belongs to the mitochondrial carrier (TC 2.A.29) family. SLC25A38 subfamily.

It is found in the mitochondrion inner membrane. The enzyme catalyses glycine(in) = glycine(out). Mitochondrial glycine transporter that imports glycine into the mitochondrial matrix. Plays an important role in providing glycine for the first enzymatic step in heme biosynthesis, the condensation of glycine with succinyl-CoA to produce 5-aminolevulinate (ALA) in the mitochondrial matrix. This is Mitochondrial glycine transporter from Laccaria bicolor (strain S238N-H82 / ATCC MYA-4686) (Bicoloured deceiver).